Here is a 122-residue protein sequence, read N- to C-terminus: Large ribosomal subunit protein uL14 (122 aa).

Belongs to the universal ribosomal protein uL14 family. Part of the 50S ribosomal subunit. Forms a cluster with proteins L3 and L19. In the 70S ribosome, L14 and L19 interact and together make contacts with the 16S rRNA in bridges B5 and B8.

Functionally, binds to 23S rRNA. Forms part of two intersubunit bridges in the 70S ribosome. This Amoebophilus asiaticus (strain 5a2) protein is Large ribosomal subunit protein uL14.